We begin with the raw amino-acid sequence, 119 residues long: Large ribosomal subunit protein bL20 (119 aa).

The protein belongs to the bacterial ribosomal protein bL20 family.

Functionally, binds directly to 23S ribosomal RNA and is necessary for the in vitro assembly process of the 50S ribosomal subunit. It is not involved in the protein synthesizing functions of that subunit. The chain is Large ribosomal subunit protein bL20 from Halorhodospira halophila (strain DSM 244 / SL1) (Ectothiorhodospira halophila (strain DSM 244 / SL1)).